The primary structure comprises 308 residues: Mitochondrial import receptor subunit TOM40B (308 aa).

The disordered stretch occupies residues 1–29; it reads MGNTLGLAPMGTLPRRSPRREEPLPNPGS. The tract at residues 281-308 is required for mitochondrial targeting; sequence PLPVTLALGAFLNHWRNRFHCGFSITVG.

The protein belongs to the Tom40 family. In terms of assembly, forms part of the preprotein translocase of the outer mitochondrial membrane (TOM complex) containing TOMM22, TOMM40, TOMM40L and TOMM70. Interacts with mitochondrial targeting sequences.

It localises to the mitochondrion outer membrane. Its function is as follows. Potential channel-forming protein implicated in import of protein precursors into mitochondria. In Homo sapiens (Human), this protein is Mitochondrial import receptor subunit TOM40B (TOMM40L).